The chain runs to 202 residues: Peptide deformylase 2 (202 aa).

Positions 120 and 162 each coordinate Fe cation. Residue glutamate 163 is part of the active site. Histidine 166 contacts Fe cation.

The protein belongs to the polypeptide deformylase family. The cofactor is Fe(2+).

The enzyme catalyses N-terminal N-formyl-L-methionyl-[peptide] + H2O = N-terminal L-methionyl-[peptide] + formate. Removes the formyl group from the N-terminal Met of newly synthesized proteins. Requires at least a dipeptide for an efficient rate of reaction. N-terminal L-methionine is a prerequisite for activity but the enzyme has broad specificity at other positions. This Rickettsia conorii (strain ATCC VR-613 / Malish 7) protein is Peptide deformylase 2.